We begin with the raw amino-acid sequence, 463 residues long: Putative dipeptidase YtjP (463 aa).

Residue His-85 participates in Zn(2+) binding. Residue Asp-87 is part of the active site. Asp-116 serves as a coordination point for Zn(2+). The active-site Proton acceptor is Glu-150. Glu-151, Asp-174, and His-436 together coordinate Zn(2+).

This sequence belongs to the peptidase M20A family. Requires Zn(2+) as cofactor.

This chain is Putative dipeptidase YtjP (ytjP), found in Bacillus subtilis (strain 168).